The sequence spans 611 residues: Threonine--tRNA ligase (611 aa).

Residues 1-27 form a disordered region; sequence MAGPEPEPVSSAAATTPAPSAPVVLPK. Low complexity predominate over residues 8–24; it reads PVSSAAATTPAPSAPVV. Residues 209–502 are catalytic; the sequence is DHRRIGKDLD…MTENYAGDYP (294 aa). Residues C302, H353, and H479 each coordinate Zn(2+).

This sequence belongs to the class-II aminoacyl-tRNA synthetase family. As to quaternary structure, homodimer. Zn(2+) serves as cofactor.

It is found in the cytoplasm. It catalyses the reaction tRNA(Thr) + L-threonine + ATP = L-threonyl-tRNA(Thr) + AMP + diphosphate + H(+). Functionally, catalyzes the attachment of threonine to tRNA(Thr) in a two-step reaction: L-threonine is first activated by ATP to form Thr-AMP and then transferred to the acceptor end of tRNA(Thr). Also edits incorrectly charged L-seryl-tRNA(Thr). The sequence is that of Threonine--tRNA ligase from Synechococcus sp. (strain CC9605).